A 431-amino-acid chain; its full sequence is Serine/threonine-protein kinase Sgk1 (431 aa).

The interval 1–60 (MTVKAEAARSTLTYSRMRGMVAILIAFMKQRRMGLNDFIQKIASNTYACKHAEVQSILKM) is necessary for localization to the mitochondria. The segment at 65 to 92 (EPELMNANPSPPPSPSQQINLGPSSNPH) is disordered. Phosphoserine is present on serine 74. Serine 78 is modified (phosphoserine; by MAPK7). Polar residues predominate over residues 81-91 (QQINLGPSSNP). Residues 98–355 (FHFLKVIGKG…FMEIKSHIFF (258 aa)) enclose the Protein kinase domain. Residues 104-112 (IGKGSFGKV) and lysine 127 contribute to the ATP site. The Nuclear localization signal motif lies at 131-141 (KKAILKKKEEK). Aspartate 222 functions as the Proton acceptor in the catalytic mechanism. At threonine 256 the chain carries Phosphothreonine; by PDPK1. Positions 356 to 431 (SLINWDDLIN…SYAPPVDSFL (76 aa)) constitute an AGC-kinase C-terminal domain. Threonine 369 is subject to Phosphothreonine; by PKA. A phosphoserine mark is found at serine 397, serine 401, and serine 422.

This sequence belongs to the protein kinase superfamily. AGC Ser/Thr protein kinase family. Homodimer; disulfide-linked. Interacts with MAPK3/ERK1, MAPK1/ERK2, MAP2K1/MEK1, MAP2K2/MEK2, NEDD4, NEDD4L, MAPT/TAU, MAPK7, CREB1, SLC9A3R2/NHERF2 and KCNJ1/ROMK1. Forms a trimeric complex with FBXW7 and NOTCH1 Associates with the mammalian target of rapamycin complex 2 (mTORC2) via an interaction with MAPKAP1/SIN1. Post-translationally, regulated by phosphorylation. Activated by phosphorylation on Ser-422 by mTORC2, transforming it into a substrate for PDPK1 which phosphorylates it on Thr-256. Phosphorylation on Ser-397 and Ser-401 are also essential for its activity. Phosphorylation on Ser-78 by MAPK7 is required for growth factor-induced cell cycle progression. In terms of processing, ubiquitinated by NEDD4L; which promotes proteasomal degradation. Ubiquitinated by SYVN1 at the endoplasmic reticulum; which promotes rapid proteasomal degradation and maintains a high turnover rate in resting cells.

Its subcellular location is the cytoplasm. It localises to the nucleus. The protein resides in the endoplasmic reticulum membrane. The protein localises to the cell membrane. It is found in the mitochondrion. It carries out the reaction L-seryl-[protein] + ATP = O-phospho-L-seryl-[protein] + ADP + H(+). It catalyses the reaction L-threonyl-[protein] + ATP = O-phospho-L-threonyl-[protein] + ADP + H(+). With respect to regulation, two specific sites, one in the kinase domain (Thr-256) and the other in the C-terminal regulatory region (Ser-422), need to be phosphorylated for its full activation. Phosphorylation at Ser-397 and Ser-401 are also essential for its activity. Activated by WNK1, WNK2, WNK3 and WNK4; which promote phosphorylation by mTORC2. Serine/threonine-protein kinase which is involved in the regulation of a wide variety of ion channels, membrane transporters, cellular enzymes, transcription factors, neuronal excitability, cell growth, proliferation, survival, migration and apoptosis. Plays an important role in cellular stress response. Contributes to regulation of renal Na(+) retention, renal K(+) elimination, salt appetite, gastric acid secretion, intestinal Na(+)/H(+) exchange and nutrient transport, insulin-dependent salt sensitivity of blood pressure, salt sensitivity of peripheral glucose uptake, cardiac repolarization and memory consolidation. Up-regulates Na(+) channels: SCNN1A/ENAC, SCN5A and ASIC1/ACCN2, K(+) channels: KCNJ1/ROMK1, KCNA1-5, KCNQ1-5 and KCNE1, epithelial Ca(2+) channels: TRPV5 and TRPV6, chloride channels: BSND, CLCN2 and CFTR, glutamate transporters: SLC1A3/EAAT1, SLC1A2 /EAAT2, SLC1A1/EAAT3, SLC1A6/EAAT4 and SLC1A7/EAAT5, amino acid transporters: SLC1A5/ASCT2, SLC38A1/SN1 and SLC6A19, creatine transporter: SLC6A8, Na(+)/dicarboxylate cotransporter: SLC13A2/NADC1, Na(+)-dependent phosphate cotransporter: SLC34A2/NAPI-2B, glutamate receptor: GRIK2/GLUR6. Up-regulates carriers: SLC9A3/NHE3, SLC12A1/NKCC2, SLC12A3/NCC, SLC5A3/SMIT, SLC2A1/GLUT1, SLC5A1/SGLT1 and SLC15A2/PEPT2. Regulates enzymes: GSK3A/B, PMM2 and Na(+)/K(+) ATPase, and transcription factors: CTNNB1 and nuclear factor NF-kappa-B. Stimulates sodium transport into epithelial cells by enhancing the stability and expression of SCNN1A/ENAC. This is achieved by phosphorylating the NEDD4L ubiquitin E3 ligase, promoting its interaction with 14-3-3 proteins, thereby preventing it from binding to SCNN1A/ENAC and targeting it for degradation. Regulates store-operated Ca(+2) entry (SOCE) by stimulating ORAI1 and STIM1. Regulates KCNJ1/ROMK1 directly via its phosphorylation or indirectly via increased interaction with SLC9A3R2/NHERF2. Phosphorylates MDM2 and activates MDM2-dependent ubiquitination of p53/TP53. Phosphorylates MAPT/TAU and mediates microtubule depolymerization and neurite formation in hippocampal neurons. Phosphorylates SLC2A4/GLUT4 and up-regulates its activity. Phosphorylates APBB1/FE65 and promotes its localization to the nucleus. Phosphorylates MAPK1/ERK2 and activates it by enhancing its interaction with MAP2K1/MEK1 and MAP2K2/MEK2. Phosphorylates FBXW7 and plays an inhibitory role in the NOTCH1 signaling. Phosphorylates FOXO1 resulting in its relocalization from the nucleus to the cytoplasm. Phosphorylates FOXO3, promoting its exit from the nucleus and interference with FOXO3-dependent transcription. Phosphorylates BRAF and MAP3K3/MEKK3 and inhibits their activity. Phosphorylates SLC9A3/NHE3 in response to dexamethasone, resulting in its activation and increased localization at the cell membrane. Phosphorylates CREB1. Necessary for vascular remodeling during angiogenesis. The polypeptide is Serine/threonine-protein kinase Sgk1 (Sgk1) (Mus musculus (Mouse)).